Consider the following 156-residue polypeptide: Arginine repressor (156 aa).

The protein belongs to the ArgR family.

The protein localises to the cytoplasm. Its pathway is amino-acid biosynthesis; L-arginine biosynthesis [regulation]. Functionally, regulates arginine biosynthesis genes. The polypeptide is Arginine repressor (Shewanella pealeana (strain ATCC 700345 / ANG-SQ1)).